Here is a 459-residue protein sequence, read N- to C-terminus: Argininosuccinate lyase (459 aa).

It belongs to the lyase 1 family. Argininosuccinate lyase subfamily.

The protein localises to the cytoplasm. It carries out the reaction 2-(N(omega)-L-arginino)succinate = fumarate + L-arginine. It functions in the pathway amino-acid biosynthesis; L-arginine biosynthesis; L-arginine from L-ornithine and carbamoyl phosphate: step 3/3. The protein is Argininosuccinate lyase of Lactococcus lactis subsp. lactis (strain IL1403) (Streptococcus lactis).